Consider the following 310-residue polypeptide: Small ribosomal subunit biogenesis GTPase RsgA (310 aa).

One can recognise a CP-type G domain in the interval 77–238; sequence LSKQSHILAA…IIDTPGIKGF (162 aa). GTP contacts are provided by residues 126–129 and 180–188; these read NKVD and GHSGVGKST. Positions 262, 267, 269, and 275 each coordinate Zn(2+).

This sequence belongs to the TRAFAC class YlqF/YawG GTPase family. RsgA subfamily. In terms of assembly, monomer. Associates with 30S ribosomal subunit, binds 16S rRNA. Zn(2+) is required as a cofactor.

The protein resides in the cytoplasm. In terms of biological role, one of several proteins that assist in the late maturation steps of the functional core of the 30S ribosomal subunit. Helps release RbfA from mature subunits. May play a role in the assembly of ribosomal proteins into the subunit. Circularly permuted GTPase that catalyzes slow GTP hydrolysis, GTPase activity is stimulated by the 30S ribosomal subunit. This is Small ribosomal subunit biogenesis GTPase RsgA from Bacteroides fragilis (strain YCH46).